A 306-amino-acid polypeptide reads, in one-letter code: MNFDQKAVKFLANFYINGGKHWTRGPLSQKPLHPTQPSAAAVLWWDQELETAWDEMWHPKMKRSSSGFRLRIGAPNESTPISTGTLRELWLERRPPILMDLDVPGPAQYEVPNMSLREASPHPQYTIGRKYPVREGGGRRAWQTMWLQSESPFMQKTDFNRETKWPSPAEYTPLSQPAFPAFSFGDRHRSVVKMPESRFRPGMLRARGPCSYTPLLPTSKPSGEKRPSPNTYNILPGYRLQSTRSPAFSMSRSPAFASWVSSSGTPGPAAYYVEDCYNSRFPSSPGVVIQGVRRPKRHDTGPFCTL.

The disordered stretch occupies residues 210–230 (CSYTPLLPTSKPSGEKRPSPN).

This Mus musculus (Mouse) protein is Protein STPG3.